Here is a 279-residue protein sequence, read N- to C-terminus: DNA repair protein RecO (279 aa).

It belongs to the RecO family.

In terms of biological role, involved in DNA repair and RecF pathway recombination. This chain is DNA repair protein RecO, found in Thermosynechococcus vestitus (strain NIES-2133 / IAM M-273 / BP-1).